The chain runs to 196 residues: Imidazoleglycerol-phosphate dehydratase (196 aa).

This sequence belongs to the imidazoleglycerol-phosphate dehydratase family.

The protein resides in the cytoplasm. It catalyses the reaction D-erythro-1-(imidazol-4-yl)glycerol 3-phosphate = 3-(imidazol-4-yl)-2-oxopropyl phosphate + H2O. Its pathway is amino-acid biosynthesis; L-histidine biosynthesis; L-histidine from 5-phospho-alpha-D-ribose 1-diphosphate: step 6/9. This is Imidazoleglycerol-phosphate dehydratase from Caulobacter vibrioides (strain ATCC 19089 / CIP 103742 / CB 15) (Caulobacter crescentus).